Here is a 1451-residue protein sequence, read N- to C-terminus: Copper-transporting ATPase 2 (1451 aa).

Topologically, residues 1–646 (MPEQERKVTA…KTEIKQWKKS (646 aa)) are cytoplasmic. HMA domains lie at 57–123 (TTGV…FEAS), 142–208 (AVVK…FEAA), and 256–322 (ATLP…PGYF). Cu(+) contacts are provided by Cys68, Cys71, Cys153, Cys156, Cys267, and Cys270. Residues 328–353 (DGLEKESGSSSVPSLGSSQRQQEPGP) form a disordered region. Over residues 335-345 (GSSSVPSLGSS) the composition is skewed to low complexity. The HMA 4 domain occupies 355–421 (RTAVLTITGI…AVEDMGFEVS (67 aa)). A phosphoserine mark is found at Ser469, Ser471, and Ser474. HMA domains lie at 481–547 (QKCF…FEAA) and 557–623 (GDIE…FHAS). Positions 492, 495, 568, and 571 each coordinate Cu(+). Residues 647-668 (FLCSLVFGIPVMGLMIYMLIPS) traverse the membrane as a helical segment. Residues 669-690 (SKPHETMVLDHNIIPGLSVLNL) lie on the Extracellular side of the membrane. Residues 691 to 710 (IFFILCTFVQFLGGWYFYVQ) form a helical membrane-spanning segment. Topologically, residues 711–717 (AYKSLRH) are cytoplasmic. Residues 718–738 (KSANMDVLIVLATTIAYAYSL) form a helical membrane-spanning segment. Over 739–757 (VILVVAIAEKAEKSPVTFF) the chain is Extracellular. Residues 758-778 (DTPPMLFVFIALGRWLEHVAK) form a helical membrane-spanning segment. The Cytoplasmic portion of the chain corresponds to 779-912 (SKTSEALAKL…KAPIQQLADR (134 aa)). A helical membrane pass occupies residues 913-935 (FSGYFVPFIIIISTLTLVVWIII). Topologically, residues 936–965 (GFVDFGIVQKYFPSPSKHISQTEVIIRFAF) are extracellular. A helical membrane pass occupies residues 966-987 (QTSITVLCIACPCSLGLATPTA). Residues 988-1310 (VMVGTGVAAQ…LSKRTVRRIR (323 aa)) are Cytoplasmic-facing. The active-site 4-aspartylphosphate intermediate is Asp1020. The Mg(2+) site is built by Asp1255 and Asp1259. Residues 1311–1328 (VNLVLALIYNMVGIPIAA) form a helical membrane-spanning segment. Over 1329–1339 (GVFMPIGIVLQ) the chain is Extracellular. Residues 1340-1357 (PWMGSAAASSVSVVLSSL) traverse the membrane as a helical segment. Residues 1358-1451 (QLKCYRKPDL…LSDRDEEQCI (94 aa)) lie on the Cytoplasmic side of the membrane. Phosphoserine occurs at positions 1384 and 1443.

It belongs to the cation transport ATPase (P-type) (TC 3.A.3) family. Type IB subfamily. Monomer. Interacts with COMMD1/MURR1. Interacts with DCTN4, in a copper-dependent manner. Interacts with ATOX1. Interacts (via C-terminus) with ZBTB16/PLZF. In terms of tissue distribution, expressed in brain, liver, kidney, spleen and stomach. In brain, detected in neuronal cells of the hippocampal formation, olfactory bulbs, cerebellum, cerebral cortex and nuclei in the brainstem. Isoform PINA is expressed during night in adult pineal gland (pinealocytes) and retina. Isoform PINA is not detected in other tissue.

Its subcellular location is the golgi apparatus. The protein resides in the trans-Golgi network membrane. It localises to the late endosome. The catalysed reaction is Cu(+)(in) + ATP + H2O = Cu(+)(out) + ADP + phosphate + H(+). Functionally, copper ion transmembrane transporter involved in the export of copper out of the cells, such as the efflux of hepatic copper into the bile. The polypeptide is Copper-transporting ATPase 2 (Atp7b) (Rattus norvegicus (Rat)).